Reading from the N-terminus, the 284-residue chain is Tryptophan 2,3-dioxygenase (284 aa).

Substrate contacts are provided by residues 53-57 and Arg119; that span reads FIIQH. Residue His242 participates in heme binding. Thr256 serves as a coordination point for substrate.

It belongs to the tryptophan 2,3-dioxygenase family. In terms of assembly, homotetramer. Heme is required as a cofactor.

The catalysed reaction is L-tryptophan + O2 = N-formyl-L-kynurenine. It functions in the pathway amino-acid degradation; L-tryptophan degradation via kynurenine pathway; L-kynurenine from L-tryptophan: step 1/2. Its pathway is siderophore biosynthesis; quinolobactin biosynthesis. Its function is as follows. Heme-dependent dioxygenase that catalyzes the oxidative cleavage of the L-tryptophan (L-Trp) pyrrole ring and converts L-tryptophan to N-formyl-L-kynurenine. Catalyzes the oxidative cleavage of the indole moiety. Required for synthesis of the siderophore quinolobactin. The chain is Tryptophan 2,3-dioxygenase from Pseudomonas fluorescens.